Here is a 211-residue protein sequence, read N- to C-terminus: Large ribosomal subunit protein uL4 (211 aa).

The segment at 42–73 (NNRQGTHSTKDRSEVRGGGIKPWAQKGTGRAR) is disordered.

The protein belongs to the universal ribosomal protein uL4 family. As to quaternary structure, part of the 50S ribosomal subunit.

In terms of biological role, one of the primary rRNA binding proteins, this protein initially binds near the 5'-end of the 23S rRNA. It is important during the early stages of 50S assembly. It makes multiple contacts with different domains of the 23S rRNA in the assembled 50S subunit and ribosome. Forms part of the polypeptide exit tunnel. The chain is Large ribosomal subunit protein uL4 from Leptospira biflexa serovar Patoc (strain Patoc 1 / Ames).